The primary structure comprises 222 residues: Ras-related protein Rab-41 (222 aa).

The GTP site is built by S41, V42, G43, K44, T45, S46, and T63. T45 is a binding site for Mg(2+). The interval 58-66 (CACQATVGI) is switch-I. 2 residues coordinate Mg(2+): T63 and D86. G89, N144, K145, D147, S174, A175, and K176 together coordinate GTP. Positions 89 to 105 (GQERFHSLIPSYIRDST) are switch-II. The S-geranylgeranyl cysteine moiety is linked to residue C222.

It belongs to the small GTPase superfamily. Rab family. It depends on Mg(2+) as a cofactor. Widely expressed in brain, testis, lung, heart, ovary, colon, kidney, uterus and spleen but not in liver.

The protein localises to the cytoplasm. The enzyme catalyses GTP + H2O = GDP + phosphate + H(+). With respect to regulation, regulated by guanine nucleotide exchange factors (GEFs) which promote the exchange of bound GDP for free GTP. Regulated by GTPase activating proteins (GAPs) which increase the GTP hydrolysis activity. Inhibited by GDP dissociation inhibitors (GDIs). Its function is as follows. The small GTPases Rab are key regulators of intracellular membrane trafficking, from the formation of transport vesicles to their fusion with membranes. Rabs cycle between an inactive GDP-bound form and an active GTP-bound form that is able to recruit to membranes different sets of downstream effectors directly responsible for vesicle formation, movement, tethering and fusion. RAB41 is required for normal Golgi ribbon organization and ER-to-Golgi trafficking. In Homo sapiens (Human), this protein is Ras-related protein Rab-41.